The primary structure comprises 782 residues: Endonuclease MutS2 (782 aa).

ATP is bound at residue 336-343 (GPNTGGKT). The region spanning 707–782 (LDLRGYRYEE…GFGVTVAELK (76 aa)) is the Smr domain.

This sequence belongs to the DNA mismatch repair MutS family. MutS2 subfamily. As to quaternary structure, homodimer. Binds to stalled ribosomes, contacting rRNA.

In terms of biological role, endonuclease that is involved in the suppression of homologous recombination and thus may have a key role in the control of bacterial genetic diversity. Its function is as follows. Acts as a ribosome collision sensor, splitting the ribosome into its 2 subunits. Detects stalled/collided 70S ribosomes which it binds and splits by an ATP-hydrolysis driven conformational change. Acts upstream of the ribosome quality control system (RQC), a ribosome-associated complex that mediates the extraction of incompletely synthesized nascent chains from stalled ribosomes and their subsequent degradation. Probably generates substrates for RQC. In Staphylococcus carnosus (strain TM300), this protein is Endonuclease MutS2.